The sequence spans 465 residues: ATP-dependent protease ATPase subunit HslU (465 aa).

Residues V19 and 61–66 (GVGKTE) each bind ATP. The interval 153-175 (LFQSDGSDGDDETTEQDSHDEIR) is disordered. The ATP site is built by D279, E343, and R415.

This sequence belongs to the ClpX chaperone family. HslU subfamily. In terms of assembly, a double ring-shaped homohexamer of HslV is capped on each side by a ring-shaped HslU homohexamer. The assembly of the HslU/HslV complex is dependent on binding of ATP.

The protein resides in the cytoplasm. In terms of biological role, ATPase subunit of a proteasome-like degradation complex; this subunit has chaperone activity. The binding of ATP and its subsequent hydrolysis by HslU are essential for unfolding of protein substrates subsequently hydrolyzed by HslV. HslU recognizes the N-terminal part of its protein substrates and unfolds these before they are guided to HslV for hydrolysis. In Oceanobacillus iheyensis (strain DSM 14371 / CIP 107618 / JCM 11309 / KCTC 3954 / HTE831), this protein is ATP-dependent protease ATPase subunit HslU.